The primary structure comprises 88 residues: EMBRYO SURROUNDING FACTOR 1-like protein 11 (88 aa).

An N-terminal signal peptide occupies residues Met1–Tyr23. 4 cysteine pairs are disulfide-bonded: Cys44–Cys59, Cys49–Cys78, Cys57–Cys74, and Cys60–Cys67.

The protein belongs to the MEG family. In terms of tissue distribution, expressed in stems.

The chain is EMBRYO SURROUNDING FACTOR 1-like protein 11 (ESFL11) from Arabidopsis thaliana (Mouse-ear cress).